The following is a 326-amino-acid chain: Phospho-N-acetylmuramoyl-pentapeptide-transferase (326 aa).

10 helical membrane-spanning segments follow: residues I13–P33, G57–M77, E85–L105, M121–T141, N155–V175, I181–F201, V208–F228, I232–M252, L257–V277, and V305–A325.

The protein belongs to the glycosyltransferase 4 family. MraY subfamily. Mg(2+) is required as a cofactor.

The protein resides in the cell membrane. The catalysed reaction is UDP-N-acetyl-alpha-D-muramoyl-L-alanyl-gamma-D-glutamyl-meso-2,6-diaminopimeloyl-D-alanyl-D-alanine + di-trans,octa-cis-undecaprenyl phosphate = di-trans,octa-cis-undecaprenyl diphospho-N-acetyl-alpha-D-muramoyl-L-alanyl-D-glutamyl-meso-2,6-diaminopimeloyl-D-alanyl-D-alanine + UMP. It participates in cell wall biogenesis; peptidoglycan biosynthesis. Its function is as follows. Catalyzes the initial step of the lipid cycle reactions in the biosynthesis of the cell wall peptidoglycan: transfers peptidoglycan precursor phospho-MurNAc-pentapeptide from UDP-MurNAc-pentapeptide onto the lipid carrier undecaprenyl phosphate, yielding undecaprenyl-pyrophosphoryl-MurNAc-pentapeptide, known as lipid I. This chain is Phospho-N-acetylmuramoyl-pentapeptide-transferase, found in Clostridium beijerinckii (strain ATCC 51743 / NCIMB 8052) (Clostridium acetobutylicum).